Consider the following 28-residue polypeptide: Cyclotide vodo I2 (28 aa).

Cystine bridges form between Cys-4/Cys-18, Cys-8/Cys-20, and Cys-13/Cys-25.

Post-translationally, this is a cyclic peptide. Contains 3 disulfide bonds.

Functionally, probably participates in a plant defense mechanism. The protein is Cyclotide vodo I2 of Viola odorata (Sweet violet).